A 40-amino-acid chain; its full sequence is Protein P4 (40 aa).

A helical membrane pass occupies residues 10–29 (KYFAYGVAISAAGAILAEYV).

Its subcellular location is the virion membrane. Functionally, may interact with the viral DNA. The protein is Protein P4 (IV) of Pseudoalteromonas phage PM2 (Bacteriophage PM2).